The sequence spans 245 residues: Phosducin (245 aa).

Acidic residues predominate over residues 1–14 (MEEAKSQSLEEDFE). A disordered region spans residues 1 to 68 (MEEAKSQSLE…RDNKDSKERF (68 aa)). In terms of domain architecture, Phosducin spans 1-241 (MEEAKSQSLE…THALDQTNME (241 aa)). Residues 59 to 68 (RDNKDSKERF) are compositionally biased toward basic and acidic residues. At Ser73 the chain carries Phosphoserine; by PKA. The tract at residues 111–245 (YGFVYELETG…DQTNMEEDIE (135 aa)) is thioredoxin fold.

It belongs to the phosducin family. In terms of assembly, interacts with CRX. Forms a complex with the beta and gamma subunits of the GTP-binding protein, transducin. Post-translationally, light-induced changes in cyclic nucleotide levels modulate the phosphorylation of this protein by cAMP kinase.

It localises to the cytoplasm. Its subcellular location is the cytosol. The protein resides in the nucleus. It is found in the cell projection. The protein localises to the cilium. It localises to the photoreceptor outer segment. Its subcellular location is the photoreceptor inner segment. In terms of biological role, inhibits the transcriptional activation activity of the cone-rod homeobox CRX. May participate in the regulation of visual phototransduction or in the integration of photoreceptor metabolism. The polypeptide is Phosducin (PDC) (Felis catus (Cat)).